Reading from the N-terminus, the 112-residue chain is Iron-sulfur cluster assembly protein CyaY (112 aa).

Belongs to the frataxin family.

In terms of biological role, involved in iron-sulfur (Fe-S) cluster assembly. May act as a regulator of Fe-S biogenesis. This Janthinobacterium sp. (strain Marseille) (Minibacterium massiliensis) protein is Iron-sulfur cluster assembly protein CyaY.